A 197-amino-acid chain; its full sequence is Probable nicotinate-nucleotide adenylyltransferase (197 aa).

Belongs to the NadD family.

The catalysed reaction is nicotinate beta-D-ribonucleotide + ATP + H(+) = deamido-NAD(+) + diphosphate. The protein operates within cofactor biosynthesis; NAD(+) biosynthesis; deamido-NAD(+) from nicotinate D-ribonucleotide: step 1/1. In terms of biological role, catalyzes the reversible adenylation of nicotinate mononucleotide (NaMN) to nicotinic acid adenine dinucleotide (NaAD). The protein is Probable nicotinate-nucleotide adenylyltransferase of Thermosipho melanesiensis (strain DSM 12029 / CIP 104789 / BI429).